The sequence spans 126 residues: Glycine cleavage system H protein (126 aa).

A Lipoyl-binding domain is found at 20-102 (IGTIGITDYA…LGDGWFFKVR (83 aa)). Residue Lys-61 is modified to N6-lipoyllysine.

This sequence belongs to the GcvH family. The glycine cleavage system is composed of four proteins: P, T, L and H. The cofactor is (R)-lipoate.

Functionally, the glycine cleavage system catalyzes the degradation of glycine. The H protein shuttles the methylamine group of glycine from the P protein to the T protein. The sequence is that of Glycine cleavage system H protein from Rhodospirillum rubrum (strain ATCC 11170 / ATH 1.1.1 / DSM 467 / LMG 4362 / NCIMB 8255 / S1).